The following is a 583-amino-acid chain: Ras-specific guanine nucleotide-releasing factor RalGPS2 (583 aa).

The region spanning 49–287 is the Ras-GEF domain; the sequence is TPEEYAGQIT…YKLSLKIEPG (239 aa). A disordered region spans residues 283–314; that stretch reads KIEPGTSTPRSAASREDLVGPEVGASPQSGRK. A phosphoserine mark is found at Ser-293, Ser-296, Ser-308, and Ser-311. The PXXP signature appears at 324–327; it reads PQTP. At Thr-326 the chain carries Phosphothreonine. A phosphoserine mark is found at Ser-329 and Ser-343. The residue at position 361 (Thr-361) is a Phosphothreonine. Residues 372-406 form a disordered region; the sequence is DDSVMEPHAPSRGQAESSTLSSGISIGSSDGSELS. At Ser-374 the chain carries Phosphoserine. Residues 387–403 show a composition bias toward low complexity; it reads ESSTLSSGISIGSSDGS. Ser-422 is modified (phosphoserine). The region spanning 457–569 is the PH domain; that stretch reads AVTIQGVLRR…WFKHLSAACQ (113 aa). Residues 459–583 form a required for stimulation of nucleotide exchange by RALA region; sequence TIQGVLRRKT…QVPTNLMTFE (125 aa).

As to quaternary structure, interacts with the SH3 domains of GRB2 and PLCG1. Interacts with RALA.

It is found in the cytoplasm. It localises to the cell membrane. In terms of biological role, guanine nucleotide exchange factor for the small GTPase RALA. May be involved in cytoskeletal organization. May also be involved in the stimulation of transcription in a Ras-independent fashion. The chain is Ras-specific guanine nucleotide-releasing factor RalGPS2 (RALGPS2) from Homo sapiens (Human).